Consider the following 123-residue polypeptide: uncharacterized protein (123 aa).

Residues 1 to 20 form the signal peptide; it reads MSPLIVGTLIIILLSGLATA. Gly96 carries GPI-anchor amidated glycine lipidation. Residues 97–123 constitute a propeptide, removed in mature form; the sequence is SSPTTKRVIYIVMILLVLITLAVNLKH.

The protein resides in the cell membrane. This is an uncharacterized protein from Schizosaccharomyces pombe (strain 972 / ATCC 24843) (Fission yeast).